We begin with the raw amino-acid sequence, 639 residues long: Poly(A)-specific ribonuclease PARN (639 aa).

Residues Asp-28 and Glu-30 each contribute to the a divalent metal cation site. Phosphoserine is present on residues Ser-163 and Ser-167. An R3H domain is found at 178–245 (KKFIDQVVEK…ERYIVISKVD (68 aa)). Lys-220 carries the N6-acetyllysine modification. The a divalent metal cation site is built by Asp-292 and Asp-382. An N6-acetyllysine modification is found at Lys-499. Ser-530 is modified (phosphoserine). The residue at position 557 (Ser-557) is a Phosphoserine; by MAPKAPK2. A disordered region spans residues 560 to 639 (APSTVGKRNL…ATLFEVPDTW (80 aa)). A phosphoserine mark is found at Ser-583 and Ser-587. The segment covering 606–615 (KKAKKLKRMK) has biased composition (basic residues). Ser-619, Ser-623, and Ser-628 each carry phosphoserine. Residue Thr-631 is modified to Phosphothreonine.

This sequence belongs to the CAF1 family. In terms of assembly, homodimer. Found in a mRNA decay complex with RENT1, RENT2 and RENT3B. Interacts with KHSRP. Interacts with CELF1/CUGBP1. Interacts with ZC3HAV1 in an RNA-independent manner. Interacts with DHX36. Mg(2+) is required as a cofactor. Post-translationally, phosphorylation by MAPKAPK2, preventing GADD45A mRNA degradation after genotoxic stress. Ubiquitous.

The protein resides in the nucleus. It is found in the cytoplasm. Its subcellular location is the nucleolus. It carries out the reaction Exonucleolytic cleavage of poly(A) to 5'-AMP.. Functionally, 3'-exoribonuclease that has a preference for poly(A) tails of mRNAs, thereby efficiently degrading poly(A) tails. Exonucleolytic degradation of the poly(A) tail is often the first step in the decay of eukaryotic mRNAs and is also used to silence certain maternal mRNAs translationally during oocyte maturation and early embryonic development. Interacts with both the 3'-end poly(A) tail and the 5'-end cap structure during degradation, the interaction with the cap structure being required for an efficient degradation of poly(A) tails. Involved in nonsense-mediated mRNA decay, a critical process of selective degradation of mRNAs that contain premature stop codons. Also involved in degradation of inherently unstable mRNAs that contain AU-rich elements (AREs) in their 3'-UTR, possibly via its interaction with KHSRP. Probably mediates the removal of poly(A) tails of AREs mRNAs, which constitutes the first step of destabilization. Also able to recognize and trim poly(A) tails of microRNAs such as MIR21 and H/ACA box snoRNAs (small nucleolar RNAs) leading to microRNAs degradation or snoRNA increased stability. The sequence is that of Poly(A)-specific ribonuclease PARN (PARN) from Homo sapiens (Human).